A 262-amino-acid chain; its full sequence is Small ribosomal subunit protein uS2 (262 aa).

Residues 223–262 (KSLLEQDGGEQAAGEEVSQDEKDAVVAEAMSEEDFGEDEE) form a disordered region. Residues 227 to 238 (EQDGGEQAAGEE) are compositionally biased toward low complexity. The span at 252–262 (MSEEDFGEDEE) shows a compositional bias: acidic residues.

It belongs to the universal ribosomal protein uS2 family.

The sequence is that of Small ribosomal subunit protein uS2 from Campylobacter concisus (strain 13826).